The following is a 778-amino-acid chain: General transcription and DNA repair factor IIH helicase subunit XPD/RAD3 (778 aa).

The 279-residue stretch at 7-285 (DLPVLFPYPK…KVDSQKLQDE (279 aa)) folds into the Helicase ATP-binding domain. 42 to 49 (MPSGTGKT) is a binding site for ATP. 4 residues coordinate [4Fe-4S] cluster: cysteine 115, cysteine 133, cysteine 156, and cysteine 191. Positions 235–238 (DEAH) match the DEAH box motif. Positions 750–765 (SRKDQGGFIENENKEG) are enriched in basic and acidic residues. Residues 750–778 (SRKDQGGFIENENKEGEQDEDEDEDIEMQ) form a disordered region. Over residues 766 to 778 (EQDEDEDEDIEMQ) the composition is skewed to acidic residues.

Belongs to the helicase family. RAD3/XPD subfamily. As to quaternary structure, component of the 7-subunit TFIIH core complex composed of XPB/SSL2, XPD/RAD3, SSL1, TFB1, TFB2, TFB4 and TFB5, which is active in NER. The core complex associates with the 3-subunit CTD-kinase module TFIIK composed of CCL1, KIN28 and TFB3 to form the 10-subunit holoenzyme (holo-TFIIH) active in transcription. An additionnal subunit, TFB6, plays a role in the dissociation of the SSL2 helicase from TFIIH after transcription initiation. The cofactor is [4Fe-4S] cluster. Mg(2+) serves as cofactor.

It is found in the nucleus. The catalysed reaction is Couples ATP hydrolysis with the unwinding of duplex DNA at the replication fork by translocating in the 5'-3' direction. This creates two antiparallel DNA single strands (ssDNA). The leading ssDNA polymer is the template for DNA polymerase III holoenzyme which synthesizes a continuous strand.. It carries out the reaction ATP + H2O = ADP + phosphate + H(+). In terms of biological role, ATP-dependent 5'-3' DNA helicase. Component of the general transcription and DNA repair factor IIH (TFIIH) core complex, which is involved in general and transcription-coupled nucleotide excision repair (NER) of damaged DNA and, when complexed to TFIIK, in RNA transcription by RNA polymerase II. In NER, TFIIH acts by opening DNA around the lesion to allow the excision of the damaged oligonucleotide and its replacement by a new DNA fragment. The ATP-dependent helicase activity of XPD/RAD3 is required for DNA opening. In transcription, TFIIH has an essential role in transcription initiation. When the pre-initiation complex (PIC) has been established, TFIIH is required for promoter opening and promoter escape. Phosphorylation of the C-terminal tail (CTD) of the largest subunit of RNA polymerase II by the kinase module TFIIK controls the initiation of transcription. XPD/RAD3 acts by forming a bridge between TFIIK and the core-TFIIH complex. Involved in the maintenance of the fidelity of DNA replication. Has single-stranded DNA-dependent ATPase activity. 5'-3' DNA helicase activity requires ATP (dATP partially substitutes), will unwind over 800 bp dsDNA. Able to unwind an RNA:DNA hybrid. In Saccharomyces cerevisiae (strain ATCC 204508 / S288c) (Baker's yeast), this protein is General transcription and DNA repair factor IIH helicase subunit XPD/RAD3.